A 361-amino-acid polypeptide reads, in one-letter code: Tegument protein UL51 homolog (361 aa).

Residue Cys8 is the site of S-palmitoyl cysteine; by host attachment. The interval 251–299 is disordered; it reads GDEEDEVTVMSPSPEPVQQQPPVEPVQQQPQGRGSHRRRYKESAPQETL. A compositionally biased stretch (low complexity) spans 266 to 281; it reads PVQQQPPVEPVQQQPQ.

Belongs to the herpesviridae UL51 family. In terms of assembly, oligomerizes. Interacts with UL103; this interaction mediates UL103 incorporation to virions. Phosphorylated. In terms of processing, palmitoylation is necessary for Golgi localization.

The protein localises to the virion tegument. It is found in the host cytoplasm. Its subcellular location is the host Golgi apparatus. Plays several roles during the time course of infection, including egress of virus particles from the perinuclear space and secondary envelopment of cytoplasmic capsids that bud into specific trans-Golgi network (TGN)-derived membranes. In Homo sapiens (Human), this protein is Tegument protein UL51 homolog (UL71).